The chain runs to 133 residues: MPDVDWNMLRGNATQAAAGAYVPYSRFAVGAAALVDDGRVVTGCNVENVSYGLTLCAECAVVCALHSTGGGRLLALACVDGHGSVLMPCGRCRQVLLEHGGSELLIDHPVRPRRLGDLLPDAFGLDDLPRERR.

A CMP/dCMP-type deaminase domain is found at 4-126 (VDWNMLRGNA…DLLPDAFGLD (123 aa)). Position 45-47 (45-47 (NVE)) interacts with substrate. A Zn(2+)-binding site is contributed by Cys56. The active-site Proton donor is Glu58. Residues Cys89 and Cys92 each contribute to the Zn(2+) site.

This sequence belongs to the cytidine and deoxycytidylate deaminase family. In terms of assembly, homotetramer. Requires Zn(2+) as cofactor.

It catalyses the reaction cytidine + H2O + H(+) = uridine + NH4(+). It carries out the reaction 2'-deoxycytidine + H2O + H(+) = 2'-deoxyuridine + NH4(+). Functionally, recycles cytidine and 2-deoxycytidine for uridine and 2-deoxyuridine synthesis, respectively. Catalyzes the hydrolytic deamination of cytidine and 2-deoxycytidine to form, respectively, uridine and 2-deoxyuridine. This is Cytidine deaminase (cdd) from Mycobacterium tuberculosis (strain CDC 1551 / Oshkosh).